We begin with the raw amino-acid sequence, 147 residues long: MHRQFLSSRCQNLFFKFKLLLFEVNQMQYVYIFIGGALGALLRYLISFLNTDGGFPIGTLIANLTGAFVMGLLTALTIAFFSNHPTLKKAITTGFLGALTTFSTFQLELIHMFDHQQFITLLLYAVTSYVFGILLCYVGIKLGGGLS.

A run of 4 helical transmembrane segments spans residues 29–49 (YVYIFIGGALGALLRYLISFL), 61–81 (IANLTGAFVMGLLTALTIAFF), 90–110 (AITTGFLGALTTFSTFQLELI), and 118–138 (FITLLLYAVTSYVFGILLCYV). Na(+)-binding residues include Gly97 and Thr100.

Belongs to the fluoride channel Fluc/FEX (TC 1.A.43) family.

The protein resides in the cell membrane. The catalysed reaction is fluoride(in) = fluoride(out). Na(+) is not transported, but it plays an essential structural role and its presence is essential for fluoride channel function. In terms of biological role, fluoride-specific ion channel. Important for reducing fluoride concentration in the cell, thus reducing its toxicity. This Staphylococcus aureus (strain MRSA252) protein is Fluoride-specific ion channel FluC 1.